Reading from the N-terminus, the 228-residue chain is ATP-dependent dethiobiotin synthetase BioD 1 (228 aa).

An ATP-binding site is contributed by 13–18 (EVGKTV). Residue threonine 17 participates in Mg(2+) binding. Residue lysine 38 is part of the active site. Serine 42 serves as a coordination point for substrate. Residues aspartate 55, 116–119 (EGAG), 176–177 (ND), and 205–207 (PWL) contribute to the ATP site. The Mg(2+) site is built by aspartate 55 and glutamate 116.

Belongs to the dethiobiotin synthetase family. In terms of assembly, homodimer. Requires Mg(2+) as cofactor.

The protein resides in the cytoplasm. It catalyses the reaction (7R,8S)-7,8-diammoniononanoate + CO2 + ATP = (4R,5S)-dethiobiotin + ADP + phosphate + 3 H(+). It participates in cofactor biosynthesis; biotin biosynthesis; biotin from 7,8-diaminononanoate: step 1/2. Functionally, catalyzes a mechanistically unusual reaction, the ATP-dependent insertion of CO2 between the N7 and N8 nitrogen atoms of 7,8-diaminopelargonic acid (DAPA, also called 7,8-diammoniononanoate) to form a ureido ring. This Salmonella typhimurium (strain LT2 / SGSC1412 / ATCC 700720) protein is ATP-dependent dethiobiotin synthetase BioD 1.